A 210-amino-acid polypeptide reads, in one-letter code: 3-hexulose-6-phosphate synthase (210 aa).

It belongs to the HPS/KGPDC family. HPS subfamily.

The catalysed reaction is D-ribulose 5-phosphate + formaldehyde = D-arabino-hex-3-ulose 6-phosphate. It functions in the pathway one-carbon metabolism; formaldehyde assimilation via RuMP pathway; D-fructose 6-phosphate from D-ribulose 5-phosphate and formaldehyde: step 1/2. Functionally, catalyzes the condensation of ribulose 5-phosphate with formaldehyde to form 3-hexulose 6-phosphate. The protein is 3-hexulose-6-phosphate synthase of Staphylococcus epidermidis (strain ATCC 12228 / FDA PCI 1200).